Here is a 398-residue protein sequence, read N- to C-terminus: Dihydroorotase (398 aa).

Zn(2+) contacts are provided by His58 and His60. Substrate-binding positions include 60 to 62 and Asn92; that span reads HFR. Zn(2+)-binding residues include Asp151, His178, and His215. A substrate-binding site is contributed by Asn256. Residue Asp283 participates in Zn(2+) binding. The active site involves Asp283. Residues His287 and 297–298 contribute to the substrate site; that span reads PG.

This sequence belongs to the metallo-dependent hydrolases superfamily. DHOase family. Class I DHOase subfamily. The cofactor is Zn(2+).

It carries out the reaction (S)-dihydroorotate + H2O = N-carbamoyl-L-aspartate + H(+). Its pathway is pyrimidine metabolism; UMP biosynthesis via de novo pathway; (S)-dihydroorotate from bicarbonate: step 3/3. Functionally, catalyzes the reversible cyclization of carbamoyl aspartate to dihydroorotate. This Clostridium botulinum (strain Eklund 17B / Type B) protein is Dihydroorotase.